The primary structure comprises 274 residues: Phosphatidylglycerol--prolipoprotein diacylglyceryl transferase (274 aa).

4 helical membrane-spanning segments follow: residues 19 to 39 (VGSV…VLGL), 59 to 79 (LAIW…VLFQ), 93 to 113 (IWRG…AALI), and 120 to 140 (VSFW…QAIG). An a 1,2-diacyl-sn-glycero-3-phospho-(1'-sn-glycerol)-binding site is contributed by Arg-141. A run of 3 helical transmembrane segments spans residues 181–201 (TFLY…ALFF), 209–229 (GTIF…IEGL), and 243–263 (QVVS…LYLL).

Belongs to the Lgt family.

Its subcellular location is the cell inner membrane. It catalyses the reaction L-cysteinyl-[prolipoprotein] + a 1,2-diacyl-sn-glycero-3-phospho-(1'-sn-glycerol) = an S-1,2-diacyl-sn-glyceryl-L-cysteinyl-[prolipoprotein] + sn-glycerol 1-phosphate + H(+). It functions in the pathway protein modification; lipoprotein biosynthesis (diacylglyceryl transfer). Functionally, catalyzes the transfer of the diacylglyceryl group from phosphatidylglycerol to the sulfhydryl group of the N-terminal cysteine of a prolipoprotein, the first step in the formation of mature lipoproteins. This chain is Phosphatidylglycerol--prolipoprotein diacylglyceryl transferase, found in Acaryochloris marina (strain MBIC 11017).